A 107-amino-acid chain; its full sequence is UPF0145 protein YbjQ (107 aa).

It belongs to the UPF0145 family.

In Salmonella gallinarum (strain 287/91 / NCTC 13346), this protein is UPF0145 protein YbjQ.